Reading from the N-terminus, the 325-residue chain is MAQYKGTMREAGRAMHLLKKREKQREQMEVLKQRIAEETILKSQVDKKFSAHYDAVEAELKSSTVGLVTLNDMKARQEALIRERERQLAKRQQLEEQRLQQERLREQEHRRERKRKISCLSFALDDLDDQADAAEARRAGNLGKNPDVDTSFLPDRDREEEENRLREELRQEWEAQREKVKDEEMEVTFSYWDGSGHRRTVRVRKGNTVQQFLKKALQGQRKDFLELRSAGVEQLMFIKEDLILPHYHTFYDFIIAKARGKSRPLFNFDVHDDVRLLSDATMEKDESHAGKVVLRSWYEKNKHIFPASRWEAYDPEKKWDKYTIR.

Alanine 2 bears the N-acetylalanine mark. The tract at residues 137 to 160 (RRAGNLGKNPDVDTSFLPDRDREE) is disordered.

It belongs to the FAM50 family.

The chain is Protein FAM50B (FAM50B) from Macaca fascicularis (Crab-eating macaque).